Consider the following 310-residue polypeptide: Methionyl-tRNA formyltransferase (310 aa).

111–114 (SLLP) provides a ligand contact to (6S)-5,6,7,8-tetrahydrofolate.

This sequence belongs to the Fmt family.

It catalyses the reaction L-methionyl-tRNA(fMet) + (6R)-10-formyltetrahydrofolate = N-formyl-L-methionyl-tRNA(fMet) + (6S)-5,6,7,8-tetrahydrofolate + H(+). In terms of biological role, attaches a formyl group to the free amino group of methionyl-tRNA(fMet). The formyl group appears to play a dual role in the initiator identity of N-formylmethionyl-tRNA by promoting its recognition by IF2 and preventing the misappropriation of this tRNA by the elongation apparatus. The polypeptide is Methionyl-tRNA formyltransferase (Rhodopseudomonas palustris (strain TIE-1)).